Reading from the N-terminus, the 25-residue chain is Caerin-1.9 (25 aa).

Residue Leu25 is modified to Leucine amide.

This sequence belongs to the frog skin active peptide (FSAP) family. Caerin subfamily. In terms of tissue distribution, expressed by the skin dorsal glands.

It localises to the secreted. In terms of biological role, antimicrobial peptide. Adopts an alpha helical conformation which can disrupt bacterial membranes. Strongly inhibits the formation of NO by neuronal nitric oxide synthase (nNOS) at micromolar concentrations. Acts by a non-competitive mechanism, probably by binding to calcium/calmodulin and as a consequence blocking calmodulin attachment to nNOS. This chain is Caerin-1.9, found in Ranoidea chloris (Red-eyed tree frog).